Reading from the N-terminus, the 69-residue chain is Guanine nucleotide-binding protein subunit gamma (69 aa).

At Ser2 the chain carries N-acetylserine. A Cysteine methyl ester modification is found at Cys66. Cys66 is lipidated: S-geranylgeranyl cysteine. A propeptide spans 67 to 69 (SVL) (removed in mature form).

This sequence belongs to the G protein gamma family. G proteins are composed of 3 units, alpha, beta and gamma. Interacts with gpbA, and this requires phlp1. In terms of processing, this protein is thought to be subject to lipidation, and this requires phlp1.

The protein localises to the cell membrane. Guanine nucleotide-binding proteins (G proteins) are involved as a modulator or transducer in various transmembrane signaling systems. This major G-protein of the squid photoreceptor is involved in visual transduction. The beta and gamma chains are required for the GTPase activity, for replacement of GDP by GTP, and for G protein-effector interaction. Required for normal chemotaxis in response to cAMP. This Dictyostelium discoideum (Social amoeba) protein is Guanine nucleotide-binding protein subunit gamma (gpgA).